A 129-amino-acid polypeptide reads, in one-letter code: MTDKWLDTINWSADGLIPAIAQDKNNGKILMVAWMNREALKRTVESGEAVYWSRSRKKLWHKGEESGHTQKISAIHLDCDEDILLLSVEQKGGIACHTGRQSCFFRQLKNGEWVVTEPVIKDPSQIYTK.

Residue Asp-78 coordinates Mg(2+). A Zn(2+)-binding site is contributed by Cys-79. The Mg(2+) site is built by Asp-80 and Asp-82. Residues Cys-96 and Cys-103 each coordinate Zn(2+).

This sequence belongs to the PRA-CH family. Homodimer. The cofactor is Mg(2+). Zn(2+) is required as a cofactor.

The protein localises to the cytoplasm. The enzyme catalyses 1-(5-phospho-beta-D-ribosyl)-5'-AMP + H2O = 1-(5-phospho-beta-D-ribosyl)-5-[(5-phospho-beta-D-ribosylamino)methylideneamino]imidazole-4-carboxamide. Its pathway is amino-acid biosynthesis; L-histidine biosynthesis; L-histidine from 5-phospho-alpha-D-ribose 1-diphosphate: step 3/9. In terms of biological role, catalyzes the hydrolysis of the adenine ring of phosphoribosyl-AMP. The protein is Phosphoribosyl-AMP cyclohydrolase of Nitrosomonas europaea (strain ATCC 19718 / CIP 103999 / KCTC 2705 / NBRC 14298).